Reading from the N-terminus, the 747-residue chain is Elongation factor G, mitochondrial (747 aa).

The transit peptide at 1 to 16 (MSLIMRVLNGNLSLRL) directs the protein to the mitochondrion. Residues 42–319 (ERIRNIGISA…AIIDYLPNPG (278 aa)) enclose the tr-type G domain. Residues 51-58 (AHIDSGKT), 118-122 (DTPGH), and 172-175 (NKLD) contribute to the GTP site.

It belongs to the TRAFAC class translation factor GTPase superfamily. Classic translation factor GTPase family. EF-G/EF-2 subfamily.

It localises to the mitochondrion. The protein operates within protein biosynthesis; polypeptide chain elongation. Functionally, mitochondrial GTPase that catalyzes the GTP-dependent ribosomal translocation step during translation elongation. During this step, the ribosome changes from the pre-translocational (PRE) to the post-translocational (POST) state as the newly formed A-site-bound peptidyl-tRNA and P-site-bound deacylated tRNA move to the P and E sites, respectively. Catalyzes the coordinated movement of the two tRNA molecules, the mRNA and conformational changes in the ribosome. Essential during development as it acts as a retrograde signal from mitochondria to the nucleus to slow down cell proliferation if mitochondrial energy output is low. The chain is Elongation factor G, mitochondrial from Drosophila grimshawi (Hawaiian fruit fly).